Reading from the N-terminus, the 132-residue chain is Large ribosomal subunit protein uL22 (132 aa).

This sequence belongs to the universal ribosomal protein uL22 family. In terms of assembly, part of the 50S ribosomal subunit.

Its function is as follows. This protein binds specifically to 23S rRNA; its binding is stimulated by other ribosomal proteins, e.g. L4, L17, and L20. It is important during the early stages of 50S assembly. It makes multiple contacts with different domains of the 23S rRNA in the assembled 50S subunit and ribosome. In terms of biological role, the globular domain of the protein is located near the polypeptide exit tunnel on the outside of the subunit, while an extended beta-hairpin is found that lines the wall of the exit tunnel in the center of the 70S ribosome. The polypeptide is Large ribosomal subunit protein uL22 (Rhodospirillum centenum (strain ATCC 51521 / SW)).